Consider the following 927-residue polypeptide: Valine--tRNA ligase (927 aa).

The 'HIGH' region motif lies at 45–55 (PNVTGSLHMGH). The 'KMSKS' region signature appears at 571–575 (KMSKS). K574 lines the ATP pocket. Residues 856 to 917 (SLIDLAAEAA…EYRDAQDKLA (62 aa)) are a coiled coil.

It belongs to the class-I aminoacyl-tRNA synthetase family. ValS type 1 subfamily. Monomer.

The protein localises to the cytoplasm. The enzyme catalyses tRNA(Val) + L-valine + ATP = L-valyl-tRNA(Val) + AMP + diphosphate. In terms of biological role, catalyzes the attachment of valine to tRNA(Val). As ValRS can inadvertently accommodate and process structurally similar amino acids such as threonine, to avoid such errors, it has a 'posttransfer' editing activity that hydrolyzes mischarged Thr-tRNA(Val) in a tRNA-dependent manner. This chain is Valine--tRNA ligase, found in Mesorhizobium japonicum (strain LMG 29417 / CECT 9101 / MAFF 303099) (Mesorhizobium loti (strain MAFF 303099)).